We begin with the raw amino-acid sequence, 1323 residues long: Tetratricopeptide repeat protein 21 homolog (1323 aa).

TPR repeat units lie at residues 56–89, 411–444, 580–613, 667–700, 702–735, 736–768, 770–802, 804–835, 845–878, 892–925, 927–959, 961–993, 995–1027, 1031–1064, 1203–1236, 1238–1270, and 1272–1305; these read VPLA…QNFS, ESPF…LIEM, SLYH…PKKE, HQLV…QSNF, LSRI…EPTP, GSYS…QSKD, QLAE…YKDK, MRLK…EPEP, IQFL…HNKI, ARIC…YETD, KSNL…DPHN, EANL…NPLH, HALF…NPRC, AGYS…PNVV, EKCW…NCNS, RAFE…TNQK, and CSFG…NPQY.

Belongs to the TTC21 family.

This is Tetratricopeptide repeat protein 21 homolog from Caenorhabditis briggsae.